Here is a 182-residue protein sequence, read N- to C-terminus: Ferredoxin-thioredoxin reductase subunit A1, chloroplastic (182 aa).

Residues 1–81 (MSSQIALSPA…VAIKSADSIN (81 aa)) constitute a chloroplast transit peptide.

It belongs to the ferredoxin thioredoxin reductase alpha subunit family. Heterodimer of subunit A (variable subunit) and subunit B (catalytic subunit). Heterodimeric FTR forms a complex with ferredoxin and thioredoxin.

The protein resides in the plastid. Its subcellular location is the chloroplast. Variable subunit of the ferredoxin-thioredoxin reductase (FTR), which catalyzes the two-electron reduction of thioredoxins by the electrons provided by reduced ferredoxin. The polypeptide is Ferredoxin-thioredoxin reductase subunit A1, chloroplastic (Arabidopsis thaliana (Mouse-ear cress)).